The sequence spans 198 residues: Syndecan-4 (198 aa).

The first 23 residues, 1–23 (MAPACLLAPLLLLLLGGFPLVPG), serve as a signal peptide directing secretion. The Extracellular segment spans residues 24–145 (ESIRETEVID…QGSNIFERTE (122 aa)). Disordered stretches follow at residues 42–76 (YFSGALPDDEDAGGSDDFELSGSGDLDDTEEPRPF) and 94–130 (AQPGIRVPSEPKELEENEVIPKRAPSDVGDDMSNKVS). Residues Ser-44, Ser-62, and Ser-64 are each glycosylated (O-linked (Xyl...) (glycosaminoglycan) serine). The segment covering 48 to 71 (PDDEDAGGSDDFELSGSGDLDDTE) has biased composition (acidic residues). A compositionally biased stretch (basic and acidic residues) spans 102–118 (SEPKELEENEVIPKRAP). Residues 146-170 (VLAALIVGGVVGILFAVFLILLLVY) form a helical membrane-spanning segment. Over 171–198 (RMKKKDEGSYDLGKKPIYKKAPTNEFYA) the chain is Cytoplasmic.

This sequence belongs to the syndecan proteoglycan family. In terms of assembly, homodimer. Interacts with CDCP1 and SDCBP. Interacts (via its cytoplasmic domain) with GIPC (via its PDZ domain). Interacts (via its cytoplasmic domain) with NUDT16L1. Interacts with DNM2; this interaction is markedly enhanced at focal ahesion site upon induction of focal adhesions and stress-fiber formation. Post-translationally, shedding is enhanced by a number of factors such as heparanase, thrombin or EGF. Also by stress and wound healing. PMA-mediated shedding is inhibited by TIMP3. In terms of processing, O-glycosylated; contains both chondroitin sulfate and heparan sulfate. Ser-44, Ser-62 and Ser-64 can all be modified by either chondroitin sulfate or heparan sulfate, and the protein exists in forms that contain only chondroitin sulfate, only heparan sulfate and both chondroitin sulfate and heparan sulfate. In terms of tissue distribution, ubiquitous. Highest levels in liver, kidney and lung.

Its subcellular location is the membrane. It localises to the secreted. Cell surface proteoglycan which regulates exosome biogenesis in concert with SDCBP and PDCD6IP. This chain is Syndecan-4, found in Mus musculus (Mouse).